Reading from the N-terminus, the 1093-residue chain is Non-canonical non-ribosomal peptide synthetase ascB (1093 aa).

Low complexity predominate over residues 1–26 (MTVNGHHTNGVNGANGTNGHANGSNG). The tract at residues 1-27 (MTVNGHHTNGVNGANGTNGHANGSNGI) is disordered. The tract at residues 35-392 (EIVPFVKPQV…LSLTFAPTDN (358 aa)) is adenylation (A) domain. In terms of domain architecture, Carrier spans 591–678 (DNLEQNLKSL…EIAAALTKGS (88 aa)). The residue at position 627 (Ser627) is an O-(pantetheine 4'-phosphoryl)serine. The tract at residues 721–971 (LTGATGSLGS…IPVDDAASTV (251 aa)) is thioester reductase (TR) domain.

This sequence belongs to the NRP synthetase family.

The enzyme catalyses ilicicolinate B + AH2 + ATP = ilicicolin B + A + AMP + diphosphate. Its pathway is secondary metabolite biosynthesis; terpenoid biosynthesis. In terms of biological role, non-canonical non-ribosomal peptide synthetase; part of the asc-1 gene cluster that mediates the biosynthesis of both ascochlorin and ascofuranone, a strong inhibitor of cyanide-insensitive alternative oxidases and a promising drug candidate against African trypanosomiasis. The first step in the pathway is performed by the non-reducing polyketide synthase ascC that produces orsellinic acid by condensing acetyl-CoA with 3 malonyl-CoA units. Orsellinic acid is then prenylated by the prenyltransferase ascA to yield ilicicolinic acid B. Ilicicolinic acid B is further reduced to ilicicolin B by the reductase ascB. The halogenase ascD then chlorinates ilicicolin B to produce ilicicolin A which is converted to ilicicolin A epoxide by the cytochrome P450 monooxygenase ascE that catalyzes stereoselective epoxidation of the terminal double bond of the prenyl group. Ilicicolin A epoxide is the last common precursor for the biosynthesis of ascofuranone and ascochlorin. The terpene cyclase ascF produces a monocyclic terpene, and the cyclization reaction is proposed to be initiated by protonation of the terminal epoxide of ilicicolin A epoxide to generate a monocyclic tertiarycation, which is followed by a series of hydride and methyl shifts with abstraction of proton, leading to the formation of the (14S,15R,19R)-trimethylcyclohexanone ring structure of ilicicolin C, which is finally reduced to ascochlorin by the dehydrogenase ascG. On the other hand, ilicicolin A epoxide is hydroxylated by the cytochrome P450 monooxygenase ascH, and the resultant product is cyclized by the terpene cyclase ascI to ascofuranol via protonation-initiated epoxide ring opening, which facilitates the 6-endo-tet cyclization to form the tetrahy-drofuran ring. Finally, ascofuranol is oxidized into ascofuranone by ascJ. This chain is Non-canonical non-ribosomal peptide synthetase ascB, found in Acremonium egyptiacum (Oospora egyptiaca).